Here is a 406-residue protein sequence, read N- to C-terminus: Imidazolonepropionase (406 aa).

Histidine 65 and histidine 67 together coordinate Fe(3+). Zn(2+)-binding residues include histidine 65 and histidine 67. Residues arginine 74, tyrosine 137, and histidine 170 each contribute to the 4-imidazolone-5-propanoate site. Residue tyrosine 137 coordinates N-formimidoyl-L-glutamate. Histidine 235 contributes to the Fe(3+) binding site. Histidine 235 is a binding site for Zn(2+). A 4-imidazolone-5-propanoate-binding site is contributed by glutamine 238. Aspartate 310 provides a ligand contact to Fe(3+). Residue aspartate 310 participates in Zn(2+) binding. N-formimidoyl-L-glutamate is bound by residues asparagine 312 and glycine 314. Threonine 315 lines the 4-imidazolone-5-propanoate pocket.

It belongs to the metallo-dependent hydrolases superfamily. HutI family. The cofactor is Zn(2+). Requires Fe(3+) as cofactor.

The protein resides in the cytoplasm. The catalysed reaction is 4-imidazolone-5-propanoate + H2O = N-formimidoyl-L-glutamate. Its pathway is amino-acid degradation; L-histidine degradation into L-glutamate; N-formimidoyl-L-glutamate from L-histidine: step 3/3. Its function is as follows. Catalyzes the hydrolytic cleavage of the carbon-nitrogen bond in imidazolone-5-propanoate to yield N-formimidoyl-L-glutamate. It is the third step in the universal histidine degradation pathway. In Vibrio vulnificus (strain YJ016), this protein is Imidazolonepropionase.